Here is a 427-residue protein sequence, read N- to C-terminus: Glutamate-1-semialdehyde 2,1-aminomutase (427 aa).

An N6-(pyridoxal phosphate)lysine modification is found at K267.

Belongs to the class-III pyridoxal-phosphate-dependent aminotransferase family. HemL subfamily. In terms of assembly, homodimer. The cofactor is pyridoxal 5'-phosphate.

The protein resides in the cytoplasm. The enzyme catalyses (S)-4-amino-5-oxopentanoate = 5-aminolevulinate. It functions in the pathway porphyrin-containing compound metabolism; protoporphyrin-IX biosynthesis; 5-aminolevulinate from L-glutamyl-tRNA(Glu): step 2/2. In Geobacter sulfurreducens (strain ATCC 51573 / DSM 12127 / PCA), this protein is Glutamate-1-semialdehyde 2,1-aminomutase.